The chain runs to 463 residues: NADH-quinone oxidoreductase subunit N (463 aa).

Helical transmembrane passes span 2-22 (NTLI…ILNF), 25-45 (GIVP…FYEF), 61-81 (FSTA…ALSH), 91-110 (ISDF…AMVS), 114-133 (LAMF…VLAA), 149-169 (FLMG…IYGA), 189-209 (IWFP…IAAV), 223-243 (PALT…ATLF), 264-284 (FTNV…IMAL), 292-312 (MLAF…LTIA), 317-337 (VLLY…SVIL), 362-382 (AAIL…SGFF), 395-415 (GYVA…GYYF), and 434-454 (PFLI…LGLF).

This sequence belongs to the complex I subunit 2 family. As to quaternary structure, NDH-1 is composed of 14 different subunits. Subunits NuoA, H, J, K, L, M, N constitute the membrane sector of the complex.

It localises to the cell inner membrane. It catalyses the reaction a quinone + NADH + 5 H(+)(in) = a quinol + NAD(+) + 4 H(+)(out). In terms of biological role, NDH-1 shuttles electrons from NADH, via FMN and iron-sulfur (Fe-S) centers, to quinones in the respiratory chain. The immediate electron acceptor for the enzyme in this species is believed to be a menaquinone. Couples the redox reaction to proton translocation (for every two electrons transferred, four hydrogen ions are translocated across the cytoplasmic membrane), and thus conserves the redox energy in a proton gradient. This Flavobacterium johnsoniae (strain ATCC 17061 / DSM 2064 / JCM 8514 / BCRC 14874 / CCUG 350202 / NBRC 14942 / NCIMB 11054 / UW101) (Cytophaga johnsonae) protein is NADH-quinone oxidoreductase subunit N.